Consider the following 147-residue polypeptide: uncharacterized protein (147 aa).

Residues 1–137 (MRDNTIGSLI…LYELMTKVHK (137 aa)) form the HTH marR-type domain. The segment at residues 53–76 (QMELAEKVTVTQGGISRMLTRLEK) is a DNA-binding region (H-T-H motif).

This is an uncharacterized protein from Bacillus cereus (strain ATCC 10987 / NRS 248).